The chain runs to 394 residues: G2/mitotic-specific cyclin-B2 (394 aa).

It belongs to the cyclin family. Cyclin AB subfamily. As to quaternary structure, interacts with the CDK1 protein kinase to form a serine/threonine kinase holoenzyme complex also known as maturation promoting factor (MPF). The cyclin subunit imparts substrate specificity to the complex.

Its function is as follows. Essential for the control of the cell cycle at the G2/M (mitosis) transition. The polypeptide is G2/mitotic-specific cyclin-B2 (ccnb2) (Anguilla japonica (Japanese eel)).